Reading from the N-terminus, the 401-residue chain is Argininosuccinate synthase (401 aa).

ATP is bound by residues Ala-7–Ser-15 and Ala-34. Tyr-85 and Ser-90 together coordinate L-citrulline. Gly-115 lines the ATP pocket. The L-aspartate site is built by Thr-117, Asn-121, and Asp-122. Residue Asn-121 coordinates L-citrulline. Positions 125, 174, 183, 259, and 271 each coordinate L-citrulline.

The protein belongs to the argininosuccinate synthase family. Type 1 subfamily. As to quaternary structure, homotetramer.

The protein resides in the cytoplasm. It catalyses the reaction L-citrulline + L-aspartate + ATP = 2-(N(omega)-L-arginino)succinate + AMP + diphosphate + H(+). Its pathway is amino-acid biosynthesis; L-arginine biosynthesis; L-arginine from L-ornithine and carbamoyl phosphate: step 2/3. The polypeptide is Argininosuccinate synthase (Desulforamulus reducens (strain ATCC BAA-1160 / DSM 100696 / MI-1) (Desulfotomaculum reducens)).